We begin with the raw amino-acid sequence, 589 residues long: Sentrin-specific protease 2 (589 aa).

Positions 28–31 match the Nuclear localization signal motif; sequence KRRR. Residue Ser-32 is modified to Phosphoserine. Positions 46-51 match the Nuclear localization signal motif; that stretch reads PAKRPR. Residues 71 to 382 are axin-binding; that stretch reads GFPFQLTTKP…EKEISNALGH (312 aa). Disordered regions lie at residues 148 to 179 and 191 to 210; these read SFGF…LMWK and EESG…GVQK. Positions 317–332 match the Nuclear export signal motif; sequence LEPDLSEEVSARLRLG. 2 positions are modified to phosphoserine: Ser-333 and Ser-344. Positions 395 to 559 are protease; that stretch reads LRITRGDIQT…MFTCKYADYI (165 aa). Catalysis depends on residues His-478 and Asp-495. The active-site Nucleophile is Cys-548.

Belongs to the peptidase C48 family. Binds to SUMO2 and SUMO3. Interacts with the C-terminal domain of NUP153 via its N-terminus. Interacts with MTA1. In terms of processing, polyubiquitinated; which leads to proteasomal degradation.

It localises to the nucleus. The protein resides in the nuclear pore complex. The protein localises to the nucleus membrane. Its subcellular location is the cytoplasm. Functionally, protease that catalyzes two essential functions in the SUMO pathway. The first is the hydrolysis of an alpha-linked peptide bond at the C-terminal end of the small ubiquitin-like modifier (SUMO) propeptides, SUMO1, SUMO2 and SUMO3 leading to the mature form of the proteins. The second is the deconjugation of SUMO1, SUMO2 and SUMO3 from targeted proteins, by cleaving an epsilon-linked peptide bond between the C-terminal glycine of the mature SUMO and the lysine epsilon-amino group of the target protein. May down-regulate CTNNB1 levels and thereby modulate the Wnt pathway. Deconjugates SUMO2 from MTA1. Plays a dynamic role in adipogenesis by desumoylating and promoting the stabilization of CEBPB. Acts as a regulator of the cGAS-STING pathway by catalyzing desumoylation of CGAS and STING1 during the late phase of viral infection. This is Sentrin-specific protease 2 (SENP2) from Pongo abelii (Sumatran orangutan).